A 153-amino-acid polypeptide reads, in one-letter code: UPF0756 membrane protein LSEI_1366 (153 aa).

4 helical membrane-spanning segments follow: residues 4-24, 52-72, 85-105, and 115-135; these read WLFL…SLII, WGVT…EIGF, WIAI…VGLL, and LVFG…GPVI.

Belongs to the UPF0756 family.

The protein localises to the cell membrane. The protein is UPF0756 membrane protein LSEI_1366 of Lacticaseibacillus paracasei (strain ATCC 334 / BCRC 17002 / CCUG 31169 / CIP 107868 / KCTC 3260 / NRRL B-441) (Lactobacillus paracasei).